The following is a 257-amino-acid chain: UPF0246 protein YaaA (257 aa).

It belongs to the UPF0246 family.

The chain is UPF0246 protein YaaA from Salmonella typhi.